Reading from the N-terminus, the 995-residue chain is MEKTDAKDQSSQGDEEKDPPKSHPYSVETPYGFHLDLDFLKYVDDIEKGNTIKRIPIHRRAKQAKFSTLPRNFSLPDSGARPPAAPPLQNWSPVVPREASLGTQEQNQSPPLGNAPQASTSRSEVSYHRKALLAEATRQLEAAEPEDAELTFGSGRPQLLRASSMPATLLHSRASEEPGLSLGPPAPPALPPLQGEGSVCDGTFEPAEGLAGFHSSSPRASTRIPELVQEGAEPPEGVVKVPNHLPLPGPPFSFQNVLVVLEDKEDEHNAREAEVLFTPGSPTPSPPPLPSPIPENELLLEEIELNISEIPPPPPVEVDMRSIGIRVTEESLGLARVDPGSISSLKQQVSALEGELSGRTEELAQVRTALQQQEEEIKAREQRIRELEFTVAQLEGQFHQENAKDTQGQTDVMVNTDPVHGLLTRESCDKGIEVNLLGSMESESWGHRGEENGLLWGPDGHKQGNQSPAERVLLPQLSLPQGPEQVLTSSVHSFLSTELRIEEAGTEQEGGPQGGTRGAGGFLWGSDRKTPPAGREETSSNLPGKEHPGRPPSSPTDATIGQYVKKIQELLQEQWNCLEHGYPELASAIKQPASKLSSIQSQLLSSLNLLLSAYSAQAHPPKEPPASSSSPPVEISPSTSLKSIMKKKDYGFRAGGNGTKKNLQFVGVNGGYETTSSEETSGEDSTPEDLSDSEAEKKCDGPDHKHVKDAHLTCEAGQGIPEGTCHAAQESGPGEEVPHSKAERYKPSEEFLNACRALSQHLPETGTTTDQLLRQSLNTISQEWFRVSSRKSSSPAVVASYLHEVQPHSPHFLKLLVNLADHNGNTALHYSVSHSNFSIVKLLLETGVCNVDHQNKAGYTAVMITPLASAETNEDMAVVWKLLREGNVNIQATQGGQTALMLGVSHDREDMVQALLSCQADVNLQDHDGSSALMVACHHGNVDLVRLLLAHPACDSSLTDKAGRTALSIALKSPTHMEIAGLLRAHAEQGRSLGL.

Disordered regions lie at residues 1-29 (MEKT…SVET) and 68-127 (TLPR…EVSY). Over residues 101 to 124 (LGTQEQNQSPPLGNAPQASTSRSE) the composition is skewed to polar residues. The stretch at 343 to 404 (SSLKQQVSAL…EGQFHQENAK (62 aa)) forms a coiled coil. 5 disordered regions span residues 443–467 (ESWG…GNQS), 503–558 (EAGT…PTDA), 617–642 (QAHP…TSLK), 663–705 (LQFV…PDHK), and 721–740 (PEGT…VPHS). A compositionally biased stretch (gly residues) spans 511-523 (GPQGGTRGAGGFL). Basic and acidic residues predominate over residues 526 to 549 (SDRKTPPAGREETSSNLPGKEHPG). Low complexity predominate over residues 625–640 (PASSSSPPVEISPSTS). A compositionally biased stretch (acidic residues) spans 680–693 (TSGEDSTPEDLSDS). The segment covering 694-705 (EAEKKCDGPDHK) has biased composition (basic and acidic residues). 5 ANK repeats span residues 823 to 853 (NGNT…NVDH), 862 to 890 (VMIT…NVNI), 895 to 924 (GGQT…DVNL), 928 to 958 (DGSS…DSSL), and 962 to 992 (AGRT…QGRS).

As to expression, strongly expressed in colon, liver, lung, skeletal muscle and kidney.

Its subcellular location is the cytoplasm. In terms of biological role, may be involved in the control of cytoskeleton formation by regulating actin polymerization. The sequence is that of KN motif and ankyrin repeat domain-containing protein 4 (KANK4) from Homo sapiens (Human).